The following is a 368-amino-acid chain: Phosphoserine aminotransferase (368 aa).

Residue R44 coordinates L-glutamate. Pyridoxal 5'-phosphate is bound by residues 78–79 (AT), W104, T157, D179, and Q202. An N6-(pyridoxal phosphate)lysine modification is found at K203. 244 to 245 (NT) is a binding site for pyridoxal 5'-phosphate.

It belongs to the class-V pyridoxal-phosphate-dependent aminotransferase family. SerC subfamily. As to quaternary structure, homodimer. Pyridoxal 5'-phosphate is required as a cofactor.

It localises to the cytoplasm. The catalysed reaction is O-phospho-L-serine + 2-oxoglutarate = 3-phosphooxypyruvate + L-glutamate. It carries out the reaction 4-(phosphooxy)-L-threonine + 2-oxoglutarate = (R)-3-hydroxy-2-oxo-4-phosphooxybutanoate + L-glutamate. Its pathway is amino-acid biosynthesis; L-serine biosynthesis; L-serine from 3-phospho-D-glycerate: step 2/3. The protein operates within cofactor biosynthesis; pyridoxine 5'-phosphate biosynthesis; pyridoxine 5'-phosphate from D-erythrose 4-phosphate: step 3/5. In terms of biological role, catalyzes the reversible conversion of 3-phosphohydroxypyruvate to phosphoserine and of 3-hydroxy-2-oxo-4-phosphonooxybutanoate to phosphohydroxythreonine. The polypeptide is Phosphoserine aminotransferase (Neisseria meningitidis serogroup C / serotype 2a (strain ATCC 700532 / DSM 15464 / FAM18)).